The chain runs to 85 residues: Putative membrane protein insertion efficiency factor (85 aa).

Belongs to the UPF0161 family.

Its subcellular location is the cell inner membrane. Could be involved in insertion of integral membrane proteins into the membrane. This chain is Putative membrane protein insertion efficiency factor, found in Sodalis glossinidius (strain morsitans).